The following is a 336-amino-acid chain: N-acetyl-gamma-glutamyl-phosphate reductase (336 aa).

Residue Cys-156 is part of the active site.

The protein belongs to the NAGSA dehydrogenase family. Type 1 subfamily.

Its subcellular location is the cytoplasm. The catalysed reaction is N-acetyl-L-glutamate 5-semialdehyde + phosphate + NADP(+) = N-acetyl-L-glutamyl 5-phosphate + NADPH + H(+). It participates in amino-acid biosynthesis; L-arginine biosynthesis; N(2)-acetyl-L-ornithine from L-glutamate: step 3/4. Catalyzes the NADPH-dependent reduction of N-acetyl-5-glutamyl phosphate to yield N-acetyl-L-glutamate 5-semialdehyde. The chain is N-acetyl-gamma-glutamyl-phosphate reductase from Moritella abyssi.